We begin with the raw amino-acid sequence, 126 residues long: MKQSVKKPPPPGDTTVRGELPNGKLEEAPPPVLPPPPRPMADKDTSNESSSGSATQNTKERPPTELSTTEATTPATPAPPLQPRTLNPASKWSKIQIVTKQTGNECVTAIEIVPATPAGMRPAANV.

The interval 1-90 (MKQSVKKPPP…LQPRTLNPAS (90 aa)) is disordered. At 1 to 126 (MKQSVKKPPP…PAGMRPAANV (126 aa)) the chain is on the cytoplasmic side. A compositionally biased stretch (pro residues) spans 28 to 39 (APPPVLPPPPRP). Over residues 47-57 (NESSSGSATQN) the composition is skewed to polar residues. A compositionally biased stretch (low complexity) spans 64 to 75 (TELSTTEATTPA).

This sequence belongs to the G-protein coupled receptor 1 family. Muscarinic acetylcholine receptor subfamily. CHRM4 sub-subfamily.

Its subcellular location is the cell membrane. The protein resides in the postsynaptic cell membrane. In terms of biological role, the muscarinic acetylcholine receptor mediates various cellular responses, including inhibition of adenylate cyclase, breakdown of phosphoinositides and modulation of potassium channels through the action of G proteins. Primary transducing effect is inhibition of adenylate cyclase. May couple to multiple functional responses in cell lines. The chain is Muscarinic acetylcholine receptor M4 (CHRM4) from Bos taurus (Bovine).